The primary structure comprises 407 residues: Large ribosomal subunit protein uL4y (407 aa).

The disordered stretch occupies residues 57–96 (PYAVSKKAGHQTSAESWGTGRAVSRIPRVPGGGTHRAGQA).

It belongs to the universal ribosomal protein uL4 family.

This Arabidopsis thaliana (Mouse-ear cress) protein is Large ribosomal subunit protein uL4y (RPL4D).